The sequence spans 426 residues: Enolase (426 aa).

Residue Gln165 participates in (2R)-2-phosphoglycerate binding. Glu207 serves as the catalytic Proton donor. Residues Asp244, Glu285, and Asp312 each contribute to the Mg(2+) site. Residues Lys337, Arg366, Ser367, and Lys388 each contribute to the (2R)-2-phosphoglycerate site. The active-site Proton acceptor is the Lys337.

Belongs to the enolase family. Mg(2+) serves as cofactor.

The protein localises to the cytoplasm. The protein resides in the secreted. It localises to the cell surface. The enzyme catalyses (2R)-2-phosphoglycerate = phosphoenolpyruvate + H2O. It functions in the pathway carbohydrate degradation; glycolysis; pyruvate from D-glyceraldehyde 3-phosphate: step 4/5. Functionally, catalyzes the reversible conversion of 2-phosphoglycerate (2-PG) into phosphoenolpyruvate (PEP). It is essential for the degradation of carbohydrates via glycolysis. This Cyanothece sp. (strain PCC 7425 / ATCC 29141) protein is Enolase.